The following is a 736-amino-acid chain: Phosphoribosylformylglycinamidine synthase subunit PurL (736 aa).

The active site involves His-49. Residues Tyr-52 and Lys-91 each coordinate ATP. Glu-93 serves as a coordination point for Mg(2+). Substrate-binding positions include 94–97 (SHNH) and Arg-116. His-95 serves as the catalytic Proton acceptor. Asp-117 provides a ligand contact to Mg(2+). Position 240 (Gln-240) interacts with substrate. Asp-268 is a Mg(2+) binding site. 312 to 314 (ESQ) is a binding site for substrate. Residues Asp-493 and Gly-530 each contribute to the ATP site. Asn-531 contributes to the Mg(2+) binding site. Substrate is bound at residue Ser-533.

This sequence belongs to the FGAMS family. In terms of assembly, monomer. Part of the FGAM synthase complex composed of 1 PurL, 1 PurQ and 2 PurS subunits.

The protein localises to the cytoplasm. The catalysed reaction is N(2)-formyl-N(1)-(5-phospho-beta-D-ribosyl)glycinamide + L-glutamine + ATP + H2O = 2-formamido-N(1)-(5-O-phospho-beta-D-ribosyl)acetamidine + L-glutamate + ADP + phosphate + H(+). It participates in purine metabolism; IMP biosynthesis via de novo pathway; 5-amino-1-(5-phospho-D-ribosyl)imidazole from N(2)-formyl-N(1)-(5-phospho-D-ribosyl)glycinamide: step 1/2. In terms of biological role, part of the phosphoribosylformylglycinamidine synthase complex involved in the purines biosynthetic pathway. Catalyzes the ATP-dependent conversion of formylglycinamide ribonucleotide (FGAR) and glutamine to yield formylglycinamidine ribonucleotide (FGAM) and glutamate. The FGAM synthase complex is composed of three subunits. PurQ produces an ammonia molecule by converting glutamine to glutamate. PurL transfers the ammonia molecule to FGAR to form FGAM in an ATP-dependent manner. PurS interacts with PurQ and PurL and is thought to assist in the transfer of the ammonia molecule from PurQ to PurL. The polypeptide is Phosphoribosylformylglycinamidine synthase subunit PurL (Rhodopseudomonas palustris (strain TIE-1)).